Consider the following 489-residue polypeptide: Siroheme synthase (489 aa).

Residues 1–203 (MDFFPVFMRL…GREDAARETL (203 aa)) form a precorrin-2 dehydrogenase /sirohydrochlorin ferrochelatase region. NAD(+) is bound by residues 22–23 (PV) and 43–44 (PA). The segment at 218–489 (GEVFLVGAGP…ARSSTEGAEA (272 aa)) is uroporphyrinogen-III C-methyltransferase. P227 provides a ligand contact to S-adenosyl-L-methionine. D250 serves as the catalytic Proton acceptor. The active-site Proton donor is K272. S-adenosyl-L-methionine is bound by residues 303-305 (GGD), I308, 333-334 (TA), M385, and G414.

This sequence in the N-terminal section; belongs to the precorrin-2 dehydrogenase / sirohydrochlorin ferrochelatase family. The protein in the C-terminal section; belongs to the precorrin methyltransferase family.

It catalyses the reaction uroporphyrinogen III + 2 S-adenosyl-L-methionine = precorrin-2 + 2 S-adenosyl-L-homocysteine + H(+). The enzyme catalyses precorrin-2 + NAD(+) = sirohydrochlorin + NADH + 2 H(+). The catalysed reaction is siroheme + 2 H(+) = sirohydrochlorin + Fe(2+). Its pathway is cofactor biosynthesis; adenosylcobalamin biosynthesis; precorrin-2 from uroporphyrinogen III: step 1/1. The protein operates within cofactor biosynthesis; adenosylcobalamin biosynthesis; sirohydrochlorin from precorrin-2: step 1/1. It participates in porphyrin-containing compound metabolism; siroheme biosynthesis; precorrin-2 from uroporphyrinogen III: step 1/1. It functions in the pathway porphyrin-containing compound metabolism; siroheme biosynthesis; siroheme from sirohydrochlorin: step 1/1. Its pathway is porphyrin-containing compound metabolism; siroheme biosynthesis; sirohydrochlorin from precorrin-2: step 1/1. Functionally, multifunctional enzyme that catalyzes the SAM-dependent methylations of uroporphyrinogen III at position C-2 and C-7 to form precorrin-2 via precorrin-1. Then it catalyzes the NAD-dependent ring dehydrogenation of precorrin-2 to yield sirohydrochlorin. Finally, it catalyzes the ferrochelation of sirohydrochlorin to yield siroheme. This is Siroheme synthase from Thioalkalivibrio sulfidiphilus (strain HL-EbGR7).